The primary structure comprises 638 residues: 1-deoxy-D-xylulose-5-phosphate synthase (638 aa).

Thiamine diphosphate is bound by residues His-78 and 119–121; that span reads AHS. Asp-150 contributes to the Mg(2+) binding site. Thiamine diphosphate contacts are provided by residues 151-152, Asn-179, Tyr-288, and Glu-370; that span reads GS. Asn-179 contributes to the Mg(2+) binding site.

It belongs to the transketolase family. DXPS subfamily. In terms of assembly, homodimer. Mg(2+) is required as a cofactor. Requires thiamine diphosphate as cofactor.

It catalyses the reaction D-glyceraldehyde 3-phosphate + pyruvate + H(+) = 1-deoxy-D-xylulose 5-phosphate + CO2. The protein operates within metabolic intermediate biosynthesis; 1-deoxy-D-xylulose 5-phosphate biosynthesis; 1-deoxy-D-xylulose 5-phosphate from D-glyceraldehyde 3-phosphate and pyruvate: step 1/1. Catalyzes the acyloin condensation reaction between C atoms 2 and 3 of pyruvate and glyceraldehyde 3-phosphate to yield 1-deoxy-D-xylulose-5-phosphate (DXP). The polypeptide is 1-deoxy-D-xylulose-5-phosphate synthase (Brucella anthropi (strain ATCC 49188 / DSM 6882 / CCUG 24695 / JCM 21032 / LMG 3331 / NBRC 15819 / NCTC 12168 / Alc 37) (Ochrobactrum anthropi)).